The following is a 343-amino-acid chain: MMMRKPDITTIRDKGKPNHACGGNNNKPKLRKGLWSPDEDEKLIRYMLTNGQGCWSDIARNAGLLRCGKSCRLRWINYLRPDLKRGSFSPQEEDLIFHLHSILGNRWSQIATRLPGRTDNEIKNFWNSTLKKRLKNNSNNNTSSGSSPNNSNSNSLDPRDQHVDMGGNSTSLMDDYHHDENMMTVGNTMRMDSSSPFNVGPMVNSVGLNQLYDPLMISVPDNGYHQMGNTVNVFSVNGLGDYGNTILDPISKRVSVEGDDWFIPPSENTNVIACSTSNNLNLQALDPCFNSKNLCHSESFKVGNVLGIENGSWEIENPKIGDWDLDGLIDNNSSFPFLDFQVD.

Basic and acidic residues predominate over residues 1-16 (MMMRKPDITTIRDKGK). The tract at residues 1-33 (MMMRKPDITTIRDKGKPNHACGGNNNKPKLRKG) is disordered. HTH myb-type domains are found at residues 27–79 (KPKL…INYL) and 80–134 (RPDL…KKRL). DNA-binding regions (H-T-H motif) lie at residues 55–79 (WSDI…INYL) and 107–130 (WSQI…NSTL). Residues 134–172 (LKNNSNNNTSSGSSPNNSNSNSLDPRDQHVDMGGNSTSL) form a disordered region. Positions 136–155 (NNSNNNTSSGSSPNNSNSNS) are enriched in low complexity.

Expressed specifically in fiber and vessel cells that are undergoing secondary wall thickening in floral stems. Expressed in vessels but not in xylary fibers in the developing secondary xylem of roots.

The protein resides in the nucleus. Its function is as follows. Transcription factor that acts as a molecular switch in the NAC012/SND1-mediated transcriptional network regulating secondary wall biosynthesis. Is directly activated by NAC012/SND1 and its close homologs, including NAC043/NST1, NAC066/NST2, NAC101/VND6 and NAC030/VND7. Is required for functional expression of a number of secondary wall-associated transcription factors and secondary wall biosynthetic genes involved in cellulose, xylan and lignin synthesis. Functions redundantly with MYB46 in the transcriptional regulatory cascade leading to secondary wall formation in fibers and vessels. Transcription activator that binds to the DNA consensus sequence 5'-ACC[AT]A[AC][TC]-3', designated as the secondary wall MYB-responsive element (SMRE). Regulates directly numerous transcription factors and a number of genes involved in secondary wall biosynthesis that contain SMRE elements in their promoters. This chain is Transcription factor MYB83, found in Arabidopsis thaliana (Mouse-ear cress).